Reading from the N-terminus, the 510-residue chain is Probable cytochrome P450 4aa1 (510 aa).

Cys450 contacts heme.

This sequence belongs to the cytochrome P450 family. Heme is required as a cofactor.

It localises to the endoplasmic reticulum membrane. It is found in the microsome membrane. Functionally, may be involved in the metabolism of insect hormones and in the breakdown of synthetic insecticides. In Drosophila melanogaster (Fruit fly), this protein is Probable cytochrome P450 4aa1 (Cyp4aa1).